Here is a 1219-residue protein sequence, read N- to C-terminus: Cullin-associated NEDD8-dissociated protein 1 (1219 aa).

An N-acetylalanine modification is found at Ala2. 18 HEAT repeats span residues 44 to 81 (DLEV…KVGE), 83 to 119 (RIVE…QIAP), 209 to 244 (KATV…AVGY), 248 to 288 (THLG…RCPR), 327 to 363 (EEDD…SRSE), 367 to 404 (KVYQ…QTGN), 423 to 460 (QEVS…VLPD), 464 to 503 (DHIG…SHAP), 599 to 636 (AELP…LHIN), 639 to 676 (CVLD…AYGD), 808 to 848 (KNCS…RKDL), 850 to 883 (AHAG…IAVG), 927 to 964 (SSVE…IEPE), 966 to 998 (LVPA…ERPE), 1002 to 1039 (EIIF…YKPN), 1043 to 1079 (GLLP…DDGL), 1101 to 1137 (NPSS…KCPS), and 1141 to 1180 (AVLD…ALRA). A disordered region spans residues 311-340 (FTDNMEEDTDNETLEDEEDDESANEYTDDE). The segment covering 314 to 340 (NMEEDTDNETLEDEEDDESANEYTDDE) has biased composition (acidic residues).

It belongs to the CAND family. As to quaternary structure, interacts with CUL1 and CUL4. Binds unneddylated CUL1, but cannot bind CUL1 once it has been neddylated. In terms of tissue distribution, highly expressed in roots. Expressed in stems, flowers and siliques.

Its function is as follows. Key assembly factor of SCF (SKP1-CUL1-F-box protein) E3 ubiquitin ligase complexes that promotes the exchange of the substrate-recognition F-box subunit in SCF complexes, thereby playing a key role in the cellular repertoire of SCF complexes. Acts as a F-box protein exchange factor. Required for SCF(TIR1) function. Modulates SCF(TIR1) function through its interactions with the CUL1 subunit. Represses photomorphogenesis by promoting HY5 degradation in darkness. The sequence is that of Cullin-associated NEDD8-dissociated protein 1 (CAND1) from Arabidopsis thaliana (Mouse-ear cress).